We begin with the raw amino-acid sequence, 2670 residues long: MNEMSSFLHIGDIVSLYAEGSVNGFISTLGLVDDRCVVEPAAGDLDNPPKKFRDCLFKVCPMNRYSAQKQYWKAKQTKQDKEKIADVVLLQKLQHAAQMEQKQNDTENKKVHGDVVKYGSVIQLLHMKSNKYLTVNKRLPALLEKNAMRVTLDATGNEGSWLFIQPFWKLRSNGDNVVVGDKVILNPVNAGQPLHASNYELSDNVGCKEVNSVNCNTSWKINLFMQFRDHLEEVLKGGDVVRLFHAEQEKFLTCDEYRGKLQVFLRTTLRQSATSATSSNALWEVEVVHHDPCRGGAGHWNGLYRFKHLATGNYLAAEENPSYKGDVSDPKAAGPGAQSRTGRRNAGEKIKYRLVAVPHGNDIASLFELDPTTLQKTDSFVPRNSYVRLRHLCTNTWIQSTNAPIDVEEERPIRLMLGTCPTKEDKEAFAIVSVPVSEIRDLDFANDASSMLASAVEKLNEGFISQNDRRFVIQLLEDLVFFVSDVPNNGQNVLDIMVTKPNRERQKLMRDENILKQIFGILKAPFRDKGGEGPLVRLEELSDQKNAPYQYMFRLCYRVLRHSQEDYRKNQEHIAKQFGMMQSQIGYDILAEDTITALLHNNRKLLEKHITKTEVETFVSLVRKNREPRFLDYLSDLCVSNRIAIPVTQELICKCVLDPKNSDILIQTELRPVKEMAQSHEYLSIEYSEEEVWLTWTDRNNEHHEKSVRQLAQEARAGNAHDENVLSYYRYQLKLFARMCLDRQYLAIDEISKQLGVELLFLCMADEMLPFDLRASFCHLMLHVHVDRDPQELVTPVKFARLWTEIPTAITIKDYDSNLNASRDDKKNKFASTMEFVEDYLNNVVGEAVPFANDEKNILTFEVVSLAHNLIYFGFYSFSELLRLTRTLLGIIDCIQAPAAVLQAYEEPGGKNVRRSIQGVGHMMSTMVLSRKQSVFGASSLPTGVGVPEQLDRSKFEDNEHTVVMETKLKILEILQFILNVRLDYRISYLLSVFKKEFVEVFPMQDSGADGTAPAFDSSTANMNLDRIGEQAEAMFGVGKTSSMLEVDDEGGRMFLRVLLHLTMHDYPPLVSGALQLLFKHFSQRQEAMHTFKQVQLLISAQDVENYKVIKSELDRLRTMVEKSELWVDKKGSVKGEEGEAGASKDKKERPSDEEGFLQPHGEKSSENYQIVKGILERLNKMCGVGEQMRKKQQRLLKNMDAHKVMLDLLQIPYDKNDNKMMEILRYTHQFLQKFCAGNPGNQALLHKHLQLFLTPGLLEAETMQHIFLNNYQLCSEISEPVLQHFVHCWPTHGRHVQYLDFLHTVIKAEGKYVKKCQDMIMTELTNAGDDVVVFYNDKASLAHLLDMMKAARDGVEDHSPLMYHISLVDLLAACAEGKNVYTEIKCTSLLPLEDVVSVVTHEDCITEVKMAYVNFVNHCYVDTEVEMKEIYTSNHIWTLFENFTLDMALVCNKREKRLSDPTLEKYVLTVVLDTISAFFSSPFSENSTSLQTHQTIVVQLLQSTTRLLECPWLQQQHKGSVEACVRTLAMVAKSRAILLPMDLDAHMSALLSSGGSCSAAAQRSAANYKTATRTFPRVIPTANQWDYKNIIEKLQDIITALEERLKPLVQAELSVLVDMLHWPELLFLEGSEAYQRCESGGFLSKLIRHTKGLMESEEKLCVKVLRTLQQMLQKKSKYGDRGNQLRKMLLQNYLQNRKSGPRGELTDPTGSGVDQDWSAIAATQCRLDKEGATKLVCDLITSTKNEKIFQESIGLAIRLLDGGNTEIQKSFYNLMTSDKKSERFFKVLHDRMKRAQQETKSTVAVNMSDLGSQPREDREPADPTTKGRVSSFSMPSSSRYSLGPGLHRGHDVSERAQNNEMGTSVLIMRPILRFLQLLCENHNRDLQNFLRCQNNKTNYNLVCETLQFLDIMCGSTTGGLGLLGLYINEDNVGLVIQTLETLTEYCQGPCHENQTCIVTHESNGIDIITALILNDISPLCKYRMDLVLQLKDNASKLLLALMESRHDSENAERILISLRPQELVDVIKKAYLQEEERENSEVSPREVGHNIYILALQLSRHNKQLQHLLKPVKRIQEEEAEGISSMLSLNNKQLSQMLKSSAPAQEEEEDPLAYYENHTSQIEIVRQDRSMEQIVFPVPAICQFLTEETKHRLFTTTEQDEQGSKVSDFFDQSSFLHNEMEWQRRLRSMPLIYWFSRRMTLWGSISFNLAVFINIIIAFFYPYVEGASTGVLGSPLISLLFWILICFSIAALFTKHYSVRPLIVALVLRSIYYLGIGPTLNILGALNLTNKIVFVVSFVGNRGTFIRGYKAMVMDMEFLYHVGYILTSVLGLFAHELFYSILLFDLIYREETLFNVIKSVTRNGRSILLTALLALILVYLFSIVGFLFLKDDFILEVDRLPGNHSRASTLGMPHGAATFMGTCSGDKMDCVSEVSVPEILEEDEELDSTERACDTLLMCIVTVMNHGLRNGGGVGDILRKPSKDESLFPARVVYDLLFFFIVIIIVLNLIFGVIIDTFADLRSEKQKKEEILKTTCFICGLERDKFDNKTVSFEEHIKLEHNMWNYLYFIVLVRVKNKTDYTGPESYVAQMIKNKNLDWFPRMRAMSLVSGEGEGEQNEIRILQEKLGSTMKLVSHLTAQLNELKEQMTEQRKRRQRLGFVDVQNCMSR.

Residues 1 to 2201 (MNEMSSFLHI…LIYWFSRRMT (2201 aa)) are Cytoplasmic-facing. 5 MIR domains span residues 113 to 173 (GDVV…LRSN), 174 to 224 (GDNV…INLF), 232 to 288 (EEVL…VEVV), 295 to 372 (GGAG…LDPT), and 378 to 434 (DSFV…IVSV). Positions 266, 268, 269, and 270 each coordinate 1D-myo-inositol 1,4,5-trisphosphate. Residues 321–344 (PSYKGDVSDPKAAGPGAQSRTGRR) form a disordered region. 1D-myo-inositol 1,4,5-trisphosphate is bound by residues arginine 503, lysine 507, arginine 510, tyrosine 567, arginine 568, and lysine 569. Arginine 743 is a Ca(2+) binding site. Phosphoserine occurs at positions 916 and 934. The Ca(2+) site is built by glutamate 1122 and glutamate 1125. The span at 1134-1153 (VKGEEGEAGASKDKKERPSD) shows a compositional bias: basic and acidic residues. Disordered stretches follow at residues 1134–1164 (VKGE…HGEK) and 1807–1849 (NMSD…GLHR). Phosphoserine is present on residues serine 1813, serine 1832, and serine 1834. Positions 1831-1842 (SSFSMPSSSRYS) are enriched in low complexity. Residues glutamate 1881 and glutamate 1945 each contribute to the Ca(2+) site. ATP is bound by residues alanine 1995, glutamate 2148, and lysine 2151. Residues 2202-2222 (LWGSISFNLAVFINIIIAFFY) form a helical membrane-spanning segment. The Extracellular segment spans residues 2223 to 2233 (PYVEGASTGVL). Residues 2234 to 2254 (GSPLISLLFWILICFSIAALF) traverse the membrane as a helical segment. The Cytoplasmic segment spans residues 2255–2263 (TKHYSVRPL). Residues 2264–2284 (IVALVLRSIYYLGIGPTLNIL) traverse the membrane as a helical segment. The Extracellular segment spans residues 2285 to 2324 (GALNLTNKIVFVVSFVGNRGTFIRGYKAMVMDMEFLYHVG). The helical transmembrane segment at 2325–2345 (YILTSVLGLFAHELFYSILLF) threads the bilayer. Residues 2346–2367 (DLIYREETLFNVIKSVTRNGRS) lie on the Cytoplasmic side of the membrane. The chain crosses the membrane as a helical span at residues 2368–2388 (ILLTALLALILVYLFSIVGFL). Residues 2389-2495 (FLKDDFILEV…ESLFPARVVY (107 aa)) are Extracellular-facing. An intrachain disulfide couples cysteine 2454 to cysteine 2460. Residues 2496 to 2516 (DLLFFFIVIIIVLNLIFGVII) traverse the membrane as a helical segment. At 2517-2670 (DTFADLRSEK…FVDVQNCMSR (154 aa)) the chain is on the cytoplasmic side. Residues cysteine 2537 and phenylalanine 2538 each contribute to the ATP site. Cysteine 2537 serves as a coordination point for Zn(2+). Residues cysteine 2540 and histidine 2557 each contribute to the Zn(2+) site. ATP-binding residues include lysine 2559, histidine 2562, asparagine 2563, and methionine 2564. Histidine 2562 lines the Zn(2+) pocket. Threonine 2580 lines the Ca(2+) pocket. Residues serine 2608 and serine 2669 each carry the phosphoserine modification.

It belongs to the InsP3 receptor family. As to quaternary structure, homotetramer. Homodimer. Interacts with TRPC1 and TRPC3. Interacts with TRPC4. Interacts with TRPV4. Interacts with SIGMAR1. Interacts with AKT1 and PML. Interacts with IRAG2 (via coiled-coil domain). Interacts with CABP1. Interacts with TMBIM4/LFG4. Interacts with CEMIP. Interacts with TESPA1. Interacts with TMEM203. Interacts with BOK; regulates ITPR3 expression. Interacts with BCL2L10. Interacts with CHGA and CHGB. In terms of processing, phosphorylated by AKT1 on serine and/or threonine residues.

Its subcellular location is the endoplasmic reticulum membrane. The protein localises to the cytoplasmic vesicle. It localises to the secretory vesicle membrane. It catalyses the reaction Ca(2+)(in) = Ca(2+)(out). Its activity is regulated as follows. Inositol 1,4,5-trisphosphate-gated calcium channel is regulated by cytosolic calcium in a biphasic manner. At low concentrations, cytosolic calcium binds at a high-affinity juxtamembrane domain (JD) calcium binding site, allowing ITPR3 to activate by escaping a low-energy resting state through an ensemble of preactivated states. At high cytosolic calcium concentrations, ITPR3 preferentially enters an inhibited state stabilized by calcium binding at a second, low-affinity cytoplasmic domain (CD) calcium binding site. Its function is as follows. Inositol 1,4,5-trisphosphate-gated calcium channel that, upon 1D-myo-inositol 1,4,5-trisphosphate binding, transports calcium from the endoplasmic reticulum lumen to cytoplasm, thus releasing the intracellular calcium and therefore participates in cellular calcium ion homeostasis. 11D-myo-inositol 1,4,5-trisphosphate binds to the ligand-free channel without altering its global conformation, yielding the low-energy resting state, then progresses through resting-to preactivated transitions to the higher energy preactivated state, which increases affinity for calcium, promoting binding of the low basal cytosolic calcium at the juxtamembrane domain (JD) site, favoring the transition through the ensemble of high-energy intermediate states along the trajectory to the fully-open activated state. Upon opening, releases calcium in the cytosol where it can bind to the low-affinity cytoplasmic domain (CD) site and stabilizes the inhibited state to terminate calcium release. The polypeptide is Inositol 1,4,5-trisphosphate-gated calcium channel ITPR3 (Rattus norvegicus (Rat)).